Here is a 488-residue protein sequence, read N- to C-terminus: Aspartyl/glutamyl-tRNA(Asn/Gln) amidotransferase subunit B (488 aa).

The protein belongs to the GatB/GatE family. GatB subfamily. In terms of assembly, heterotrimer of A, B and C subunits.

The enzyme catalyses L-glutamyl-tRNA(Gln) + L-glutamine + ATP + H2O = L-glutaminyl-tRNA(Gln) + L-glutamate + ADP + phosphate + H(+). The catalysed reaction is L-aspartyl-tRNA(Asn) + L-glutamine + ATP + H2O = L-asparaginyl-tRNA(Asn) + L-glutamate + ADP + phosphate + 2 H(+). Allows the formation of correctly charged Asn-tRNA(Asn) or Gln-tRNA(Gln) through the transamidation of misacylated Asp-tRNA(Asn) or Glu-tRNA(Gln) in organisms which lack either or both of asparaginyl-tRNA or glutaminyl-tRNA synthetases. The reaction takes place in the presence of glutamine and ATP through an activated phospho-Asp-tRNA(Asn) or phospho-Glu-tRNA(Gln). This chain is Aspartyl/glutamyl-tRNA(Asn/Gln) amidotransferase subunit B, found in Chlamydia trachomatis serovar L2 (strain ATCC VR-902B / DSM 19102 / 434/Bu).